A 42-amino-acid chain; its full sequence is Photosystem I reaction center subunit IX (42 aa).

The chain crosses the membrane as a helical span at residues Tyr-7–Ile-27.

It belongs to the PsaJ family.

The protein resides in the plastid. The protein localises to the chloroplast thylakoid membrane. May help in the organization of the PsaE and PsaF subunits. The protein is Photosystem I reaction center subunit IX of Cryptomeria japonica (Japanese cedar).